A 446-amino-acid chain; its full sequence is Maltoporin (446 aa).

The signal sequence occupies residues 1 to 25 (MMITLRKLPLAVAVAAGVMSAQAMA).

Belongs to the porin LamB (TC 1.B.3) family. In terms of assembly, homotrimer formed of three 18-stranded antiparallel beta-barrels, containing three independent channels.

It is found in the cell outer membrane. The enzyme catalyses beta-maltose(in) = beta-maltose(out). Involved in the transport of maltose and maltodextrins. This Escherichia coli (strain SE11) protein is Maltoporin.